A 306-amino-acid chain; its full sequence is Mitochondrial brown fat uncoupling protein 1 (306 aa).

The Mitochondrial intermembrane portion of the chain corresponds to 1–10 (MVGTTATDVA). The chain crosses the membrane as a helical span at residues 11–32 (PTMGVKIFSAGVAACLADVITF). Solcar repeat units lie at residues 11-102 (PTMG…VQEF), 110-200 (PSLR…MKGA), and 209-294 (DDVP…LKRE). Over 33–73 (PLDTAKVRLQIQGECQTTSGIRYKGVLGTITTLAKTEGPLK) the chain is Mitochondrial matrix. Position 56 (Lys-56) interacts with fatty acid 16:0. Residues 74–96 (LYSGLPAGLQRQISFASLRIGLY) traverse the membrane as a helical segment. The Mitochondrial intermembrane portion of the chain corresponds to 97-115 (DTVQEFWGGEEATPSLRSK). A helical transmembrane segment spans residues 116-132 (ICAGLTTGGVAVFIGQP). The Mitochondrial matrix segment spans residues 133–177 (TEVVKVRLQAQSHLHGLKPRYTGTYNAYRIIATTESLSTLWKGTT). Residues 178–194 (PNLLRNIIINCTELVTY) traverse the membrane as a helical segment. At 195–211 (DLMKGALVRNDILADDV) the chain is on the mitochondrial intermembrane side. The helical transmembrane segment at 212 to 231 (PCHLLSALIAGFCTTLLSSP) threads the bilayer. The Mitochondrial matrix portion of the chain corresponds to 232–265 (VDVVKTRFINSPQGQYTSVPSCAMSMLTKEGPTA). The residue at position 253 (Cys-253) is a Cysteine sulfenic acid (-SOH). Residues 266–288 (FFKGFAPSFLRLASWNVIMFVCF) traverse the membrane as a helical segment. Lys-268 is a fatty acid 16:0 binding site. The Mitochondrial intermembrane portion of the chain corresponds to 289–306 (EKLKRELMKSRQTVDCAT).

Belongs to the mitochondrial carrier (TC 2.A.29) family. As to quaternary structure, most probably functions as a monomer. Binds one purine nucleotide per monomer. However, has also been suggested to function as a homodimer or a homotetramer. Tightly associates with cardiolipin in the mitochondrion inner membrane; may stabilize and regulate its activity. In terms of processing, may undergo sulfenylation upon cold exposure. May increase the sensitivity of UCP1 thermogenic function to the activation by noradrenaline probably through structural effects. May undergo ubiquitin-mediated proteasomal degradation.

It is found in the mitochondrion inner membrane. It catalyses the reaction H(+)(in) = H(+)(out). Has no constitutive proton transporter activity and has to be activated by long-chain fatty acids/LCFAs. Inhibited by purine nucleotides. Both purine nucleotides and LCFAs bind the cytosolic side of the transporter and directly compete to activate or inhibit it. Activated by noradrenaline and reactive oxygen species. Despite lacking canonical translational encoding for selenocysteine, a small pool of the protein has been observed to selectively incorporate selenocysteine at 'Cys-253'. Selenocysteine-modified protein is highly sensitive to redox modification and may constitute a pool of protein highly sensitive to activation by elevated levels of reactive oxygen species (ROS). Mitochondrial protein responsible for thermogenic respiration, a specialized capacity of brown adipose tissue and beige fat that participates in non-shivering adaptive thermogenesis to temperature and diet variations and more generally to the regulation of energy balance. Functions as a long-chain fatty acid/LCFA and proton symporter, simultaneously transporting one LCFA and one proton through the inner mitochondrial membrane. However, LCFAs remaining associated with the transporter via their hydrophobic tails, it results in an apparent transport of protons activated by LCFAs. Thereby, dissipates the mitochondrial proton gradient and converts the energy of substrate oxydation into heat instead of ATP. Regulates the production of reactive oxygen species/ROS by mitochondria. This Ochotona dauurica (Daurian pika) protein is Mitochondrial brown fat uncoupling protein 1.